A 615-amino-acid polypeptide reads, in one-letter code: Elongation factor 4 (615 aa).

Residues 17-198 (ASIRNFCIIA…RVSRTIPAPV (182 aa)) enclose the tr-type G domain. Residues 29–34 (DHGKST) and 145–148 (NKID) contribute to the GTP site.

It belongs to the TRAFAC class translation factor GTPase superfamily. Classic translation factor GTPase family. LepA subfamily.

The protein resides in the cell membrane. The enzyme catalyses GTP + H2O = GDP + phosphate + H(+). Its function is as follows. Required for accurate and efficient protein synthesis under certain stress conditions. May act as a fidelity factor of the translation reaction, by catalyzing a one-codon backward translocation of tRNAs on improperly translocated ribosomes. Back-translocation proceeds from a post-translocation (POST) complex to a pre-translocation (PRE) complex, thus giving elongation factor G a second chance to translocate the tRNAs correctly. Binds to ribosomes in a GTP-dependent manner. The protein is Elongation factor 4 of Clavibacter sepedonicus (Clavibacter michiganensis subsp. sepedonicus).